A 434-amino-acid chain; its full sequence is Histidinol dehydrogenase (434 aa).

3 residues coordinate NAD(+): tyrosine 130, glutamine 188, and asparagine 211. Residues serine 237, glutamine 259, and histidine 262 each contribute to the substrate site. Positions 259 and 262 each coordinate Zn(2+). Active-site proton acceptor residues include glutamate 326 and histidine 327. Substrate-binding residues include histidine 327, aspartate 360, glutamate 414, and histidine 419. Aspartate 360 contacts Zn(2+). Histidine 419 is a Zn(2+) binding site.

It belongs to the histidinol dehydrogenase family. Homodimer. Zn(2+) is required as a cofactor.

It carries out the reaction L-histidinol + 2 NAD(+) + H2O = L-histidine + 2 NADH + 3 H(+). The protein operates within amino-acid biosynthesis; L-histidine biosynthesis; L-histidine from 5-phospho-alpha-D-ribose 1-diphosphate: step 9/9. Catalyzes the sequential NAD-dependent oxidations of L-histidinol to L-histidinaldehyde and then to L-histidine. The polypeptide is Histidinol dehydrogenase (Shigella flexneri).